We begin with the raw amino-acid sequence, 356 residues long: GTPase Obg (356 aa).

Residues 1-159 form the Obg domain; it reads MKFLDQAKVY…RWIWLRLKLI (159 aa). Residues 160-328 form the OBG-type G domain; sequence ADAGLVGLPN…ALYAIAQHLG (169 aa). GTP contacts are provided by residues 166 to 173, 191 to 195, 213 to 216, 280 to 283, and 309 to 311; these read GLPNAGKS, FTTLH, DIPG, NKID, and SGV. Residues serine 173 and threonine 193 each coordinate Mg(2+). Positions 333 to 356 are disordered; the sequence is DIPLPKPSNADEEDPDTDQPWSPV.

The protein belongs to the TRAFAC class OBG-HflX-like GTPase superfamily. OBG GTPase family. In terms of assembly, monomer. Requires Mg(2+) as cofactor.

The protein resides in the cytoplasm. Its function is as follows. An essential GTPase which binds GTP, GDP and possibly (p)ppGpp with moderate affinity, with high nucleotide exchange rates and a fairly low GTP hydrolysis rate. Plays a role in control of the cell cycle, stress response, ribosome biogenesis and in those bacteria that undergo differentiation, in morphogenesis control. In Hyphomonas neptunium (strain ATCC 15444), this protein is GTPase Obg.